A 220-amino-acid chain; its full sequence is FMN-dependent NADH:quinone oxidoreductase (220 aa).

Residues Ser10, 17 to 19 (SAS), and 136 to 139 (SRGG) contribute to the FMN site. Residues 200–220 (HSEAVTKAKELTERLTADNGR) form a disordered region.

This sequence belongs to the azoreductase type 1 family. Homodimer. Requires FMN as cofactor.

The enzyme catalyses 2 a quinone + NADH + H(+) = 2 a 1,4-benzosemiquinone + NAD(+). It catalyses the reaction N,N-dimethyl-1,4-phenylenediamine + anthranilate + 2 NAD(+) = 2-(4-dimethylaminophenyl)diazenylbenzoate + 2 NADH + 2 H(+). In terms of biological role, quinone reductase that provides resistance to thiol-specific stress caused by electrophilic quinones. Also exhibits azoreductase activity. Catalyzes the reductive cleavage of the azo bond in aromatic azo compounds to the corresponding amines. The protein is FMN-dependent NADH:quinone oxidoreductase of Streptomyces coelicolor (strain ATCC BAA-471 / A3(2) / M145).